The sequence spans 135 residues: Small ribosomal subunit protein uS8 (135 aa).

This sequence belongs to the universal ribosomal protein uS8 family. In terms of assembly, part of the 30S ribosomal subunit. Contacts proteins S5 and S12.

Functionally, one of the primary rRNA binding proteins, it binds directly to 16S rRNA central domain where it helps coordinate assembly of the platform of the 30S subunit. The chain is Small ribosomal subunit protein uS8 from Parafrankia sp. (strain EAN1pec).